Consider the following 375-residue polypeptide: Trichodiene synthase (375 aa).

It belongs to the trichodiene synthase family.

It carries out the reaction (2E,6E)-farnesyl diphosphate = trichodiene + diphosphate. It participates in sesquiterpene biosynthesis; trichothecene biosynthesis. Its function is as follows. TS is a member of the terpene cyclase group of enzymes. It catalyzes the isomerization and cyclization of farnesyl pyro-phosphate to form trichodiene, the first cyclic intermediate in the biosynthetic pathway for trichothecenes. It serves to branch trichothecene biosynthesis from the isoprenoid pathway. In Fusarium acaciae-mearnsii, this protein is Trichodiene synthase (TRI5).